A 346-amino-acid polypeptide reads, in one-letter code: MAVYAVTGGAGFLGRYIVKLLISADDVQEIRVIDIVEDPQPITSKVKVINYIQCDINDFDKVREALDGVNLIIHTAALVDVFGKYTDNEIMKVNYYGTQTILAACVDLGIKYLIYTSSMEAIGPNKHGDPFIGHEHTLYDISPGHVYAKSKRMAEQLVMKANNSVIMNGAKLYTCCLRPTGIYGEGDKLMKVFYEQCKQHGNIMYRTVDDNAVHSRVYVGNAAWMHVLAAKYIQYPGSEIKGNAYFCYDYSPSCSYDMFNLLLMKPLGIEQGSRIPRWMLKMYACKNDMKRILFRKPSLLNNYTLKISNTTFEVRTNNAELDFNYSPIFNVDVAFERTRKWLEESE.

Residue tyrosine 147 is the Proton acceptor of the active site. An NAD(+)-binding site is contributed by lysine 151.

The protein belongs to the 3-beta-HSD family.

The enzyme catalyses a 3beta-hydroxy-Delta(5)-steroid + NAD(+) = a 3-oxo-Delta(5)-steroid + NADH + H(+). It catalyses the reaction a 3-oxo-Delta(5)-steroid = a 3-oxo-Delta(4)-steroid. It functions in the pathway lipid metabolism; steroid biosynthesis. Catalyzes the oxidative conversion of Delta(5)-ene-3-beta-hydroxy steroid, and the oxidative conversion of ketosteroids. The 3-beta-HSD enzymatic system plays a crucial role in the biosynthesis of all classes of hormonal steroids. During viral infection, steroid production contributes to virulence by inhibiting the host inflammatory response. The sequence is that of 3 beta-hydroxysteroid dehydrogenase/Delta 5--&gt;4-isomerase (OPG174) from Homo sapiens (Human).